Consider the following 287-residue polypeptide: Oxaloacetate decarboxylase (287 aa).

A substrate-binding site is contributed by Ser-50. Asp-88 provides a ligand contact to Mg(2+). Residues Arg-159 and His-235 each coordinate substrate.

The protein belongs to the isocitrate lyase/PEP mutase superfamily. Oxaloacetate decarboxylase family. Homotetramer; dimer of dimers. The cofactor is Mg(2+).

The catalysed reaction is oxaloacetate + H(+) = pyruvate + CO2. Catalyzes the decarboxylation of oxaloacetate into pyruvate. Seems to play a role in maintaining cellular concentrations of bicarbonate and pyruvate. The chain is Oxaloacetate decarboxylase from Chromohalobacter salexigens (strain ATCC BAA-138 / DSM 3043 / CIP 106854 / NCIMB 13768 / 1H11).